The chain runs to 228 residues: Large ribosomal subunit protein mL64 (228 aa).

Disordered stretches follow at residues 20-44 and 186-228; these read PRSR…DREN and QRKR…KPSS. The stretch at 98-207 forms a coiled coil; the sequence is TMQESLRVQQ…KKEARIAAMA (110 aa). The Nuclear localization signal motif lies at 184 to 200; sequence KQQRKRLKEERQRQKKE. The span at 186 to 202 shows a compositional bias: basic and acidic residues; it reads QRKRLKEERQRQKKEAR. A compositionally biased stretch (low complexity) spans 212–228; it reads QDSAEAQDSAASGKPSS.

This sequence belongs to the mitochondrion-specific ribosomal protein mL64 family. As to quaternary structure, component of the mitochondrial ribosome large subunit (39S) which comprises a 16S rRNA and about 50 distinct proteins. Interacts with GADD45A, GADD45B and GADD45G. Interacts with NR4A1 via the NR4A1 AB domain. Interacts with ATAD3A and ATAD3B.

The protein resides in the mitochondrion. Its subcellular location is the nucleus. Acts as a negative regulator of G1 to S cell cycle phase progression by inhibiting cyclin-dependent kinases. Inhibitory effects are additive with GADD45 proteins but also occur in the absence of GADD45 proteins. Acts as a repressor of the orphan nuclear receptor NR4A1 by inhibiting AB domain-mediated transcriptional activity. May be involved in the hormone-mediated regulation of NR4A1 transcriptional activity. May play a role in mitochondrial protein synthesis. The protein is Large ribosomal subunit protein mL64 (Gadd45gip1) of Rattus norvegicus (Rat).